Here is a 111-residue protein sequence, read N- to C-terminus: Small ribosomal subunit protein bS16 (111 aa).

This sequence belongs to the bacterial ribosomal protein bS16 family.

The sequence is that of Small ribosomal subunit protein bS16 from Rickettsia felis (strain ATCC VR-1525 / URRWXCal2) (Rickettsia azadi).